We begin with the raw amino-acid sequence, 241 residues long: 3-oxoacyl-[acyl-carrier-protein] reductase FabG (241 aa).

Residues 13–16 (GASG), S38, 57–58 (KV), and N83 contribute to the NADP(+) site. Substrate is bound at residue S135. The Proton acceptor role is filled by Y148. Residues 148–152 (YCASK) and I181 contribute to the NADP(+) site.

It belongs to the short-chain dehydrogenases/reductases (SDR) family. In terms of assembly, homotetramer.

The catalysed reaction is a (3R)-hydroxyacyl-[ACP] + NADP(+) = a 3-oxoacyl-[ACP] + NADPH + H(+). The protein operates within lipid metabolism; fatty acid biosynthesis. In terms of biological role, catalyzes the NADPH-dependent reduction of beta-ketoacyl-ACP substrates to beta-hydroxyacyl-ACP products, the first reductive step in the elongation cycle of fatty acid biosynthesis. This is 3-oxoacyl-[acyl-carrier-protein] reductase FabG (fabG) from Rickettsia bellii (strain RML369-C).